We begin with the raw amino-acid sequence, 680 residues long: Galactose oxidase (680 aa).

The first 24 residues, 1–24 (MKHFLSLALCFSSINAVAVTVPHK), serve as a signal peptide directing secretion. Positions 25 to 41 (SGGTGSPEGSLQFLSLR) are excised as a propeptide. In terms of domain architecture, F5/8 type C spans 42–189 (ASAPIGSAIS…SIAEINVFQA (148 aa)). C59 and C68 form a disulfide bridge. Kelch repeat units follow at residues 223-268 (RVLM…HDMF), 279-321 (QIVV…TMSD), 323-372 (RVFT…LYRS), 436-490 (KILT…VLPD), and 492-544 (STFI…LLLP). The segment at residues 269 to 313 (CPGISMDGNGQIVVTGGNDAKKTSLYDSSSDSWIPGPDMQVARGY) is a cross-link (3'-(S-cysteinyl)-tyrosine (Cys-Tyr)). Y313 lines the Cu cation pocket. 2 residues coordinate Cu cation: Y536 and H537. Y536 (proton acceptor) is an active-site residue. C556 and C559 are disulfide-bonded. H622 is a binding site for Cu cation.

Monomer. Cu(2+) is required as a cofactor. Galactose oxidase contains a protein-derived free radical cofactor. In the active state, Tyr-313, which is cross-linked to Cys-269 via a thioether bond, is oxidized to a radical and acts with Cu(2+) as a two-electron acceptor in the oxidation reaction. The cross-link is believed to modulate the redox potential of the tyrosyl radical, which is further stabilized by a stacking interaction with Trp-331 in the active site. The post-translational formation of the cross-link is closely linked to the propeptide cleavage event, and both are copper-dependent, autocatalytic processes. The propeptide may act as an intramolecular chaperone, facilitating thioester bond formation and copper binding by positioning of active-site residues, including copper ligands.

It localises to the secreted. It carries out the reaction D-galactose + O2 = D-galacto-hexodialdose + H2O2. In terms of biological role, catalyzes the sterospecific oxidation of primary alcohols to the corresponding aldehydes. The biologically relevant substrate of the enzyme is not known as the enzyme exhibits broad substrate specificity from small alcohols through sugars to oligo- and polysaccharides. The protein is Galactose oxidase (GAOA) of Gibberella zeae (strain ATCC MYA-4620 / CBS 123657 / FGSC 9075 / NRRL 31084 / PH-1) (Wheat head blight fungus).